The chain runs to 453 residues: Putative dipeptidase UREG_03382 (453 aa).

The disordered stretch occupies residues 1–33 (MSTRDHVKQSPMPVQEGYPRSSKEFSPPSSRSR). A helical transmembrane segment spans residues 41-63 (LTMSLLIAAGAATFSKYIFPLGS). 3 residues coordinate Zn(2+): H95, D97, and E208. A disulfide bridge connects residues C147 and C223. A substrate-binding site is contributed by H221. Zn(2+)-binding residues include H265 and H286. Positions 297 and 357 each coordinate substrate. 2 N-linked (GlcNAc...) asparagine glycosylation sites follow: N370 and N443.

Belongs to the metallo-dependent hydrolases superfamily. Peptidase M19 family. The cofactor is Zn(2+).

It localises to the membrane. It carries out the reaction an L-aminoacyl-L-amino acid + H2O = 2 an L-alpha-amino acid. Functionally, hydrolyzes a wide range of dipeptides. The chain is Putative dipeptidase UREG_03382 from Uncinocarpus reesii (strain UAMH 1704).